Consider the following 135-residue polypeptide: Single-stranded DNA-binding protein RIM1, mitochondrial (135 aa).

Residues 1–17 (MFLRTQARFFHATTKKM) constitute a mitochondrion transit peptide. Residues 19-117 (FSKMSIVGRI…LVQKDINLLK (99 aa)) form the SSB domain.

In terms of assembly, homotetramer. Interacts with PIF1.

The protein localises to the mitochondrion. Its function is as follows. This protein binds preferentially and cooperatively to single-stranded DNA (ssDNS). Involved in mitochondrial DNA replication. Stimulates PIF1 helicase activity. The chain is Single-stranded DNA-binding protein RIM1, mitochondrial (RIM1) from Saccharomyces cerevisiae (strain ATCC 204508 / S288c) (Baker's yeast).